Reading from the N-terminus, the 152-residue chain is Aspartate carbamoyltransferase regulatory chain (152 aa).

Residues Cys107, Cys112, Cys136, and Cys139 each coordinate Zn(2+).

It belongs to the PyrI family. As to quaternary structure, contains catalytic and regulatory chains. The cofactor is Zn(2+).

In terms of biological role, involved in allosteric regulation of aspartate carbamoyltransferase. The chain is Aspartate carbamoyltransferase regulatory chain from Chromobacterium violaceum (strain ATCC 12472 / DSM 30191 / JCM 1249 / CCUG 213 / NBRC 12614 / NCIMB 9131 / NCTC 9757 / MK).